We begin with the raw amino-acid sequence, 200 residues long: Dephospho-CoA kinase (200 aa).

Residues valine 4–glycine 200 form the DPCK domain. Alanine 12–threonine 17 serves as a coordination point for ATP.

This sequence belongs to the CoaE family.

It localises to the cytoplasm. The catalysed reaction is 3'-dephospho-CoA + ATP = ADP + CoA + H(+). It participates in cofactor biosynthesis; coenzyme A biosynthesis; CoA from (R)-pantothenate: step 5/5. Functionally, catalyzes the phosphorylation of the 3'-hydroxyl group of dephosphocoenzyme A to form coenzyme A. This Lactobacillus acidophilus (strain ATCC 700396 / NCK56 / N2 / NCFM) protein is Dephospho-CoA kinase.